We begin with the raw amino-acid sequence, 37 residues long: Photosystem I reaction center subunit IX (37 aa).

Residues 4–24 (FLSSAPVLLTAMMVFTAGLLI) traverse the membrane as a helical segment.

The protein belongs to the PsaJ family.

The protein resides in the cellular thylakoid membrane. Its function is as follows. May help in the organization of the PsaE and PsaF subunits. The polypeptide is Photosystem I reaction center subunit IX (Picosynechococcus sp. (strain ATCC 27264 / PCC 7002 / PR-6) (Agmenellum quadruplicatum)).